The primary structure comprises 459 residues: Acetyltransferase pigO (459 aa).

It belongs to the trichothecene O-acetyltransferase family.

It participates in secondary metabolite biosynthesis. In terms of biological role, acetyltransferase; part of the gene cluster that mediates the biosynthesis of azaphilone pigments (MonAzPs), a complex mixture of compounds with a common azaphilone skeleton very widely used as food colorants. PigM and pigO are involved in the elimination of the omega-1 alcohol with pigM acting as an O-acetyltransferase that synthesizes the O-11 acetyl intermediate whereas pigO eliminates acetic acid to yield an intermediate with a C10(11) double bond. The first step of the pathway is performed by the nrPKS pigA that forms the hexaketide precursor from successive condensations of five malonyl-CoA units, with a simple acetyl-CoA starter unit. The role of esterase pigG is not clear, but it may play at most a supplementary role in the formation of the benzaldehyde produced by the pigA nrPKS. This very reactive benzaldehyde is intercepted by the pigC ketoreductase that to provide the first stable enzyme-free MonAzPs intermediate, 6-(4-hydroxy-2-oxopentyl)-3-methyl-2,4-dioxocyclohexane carbaldehyde, also known as M7PKS-1. The FAD-dependent monooxygenase pigN hydroxylates M7PKS-1 at C-4, which triggers the formation of the pyran ring. PigJ, pigK and pigD are involved in the acetylation of the pyran ring. PigJ and pigK form the two subunits of a dedicated fungal FAS that produces the side chain fatty acyl moiety of MonAzPs and pigD transfers the fatty acyl chain to the C-4 alcohol. PigM and pigO are involved in the elimination of the omega-1 alcohol. PigM acts as an O-acetyltransferase that synthesizes the putative O-11 acetyl intermediate whereas pigO eliminates acetic acid to yield an intermediate with a C10(11) double bond. The dehydration of the C-11 alcohol followed by the reduction of the C6(7) double bond by the NAD(P)H-dependent oxidoreductase pigE increases the electrophilicity of the C-5 ketone of the resulting acyl benzopyran. This in turn sets up the C-5 ketone for an intramolecular Knoevenagel aldol condensation with the C-20 enol of the side chain. This condensation affords the characteristic linear tricyclic carbon skeletons of the yellow pigments that serve as the common precursors for the classical yellow pigments monascin and ankaflavin, orange pigments rubopunctatin and monascorubrin, and red pigments ribropunctamine and monascorubramine. The FAD-dependent oxidoreductase pigF is especially invoved in the biosynthesis of orange and red pigments via desaturation of C6(7). The sequence is that of Acetyltransferase pigO from Monascus ruber (Mold).